The following is a 121-amino-acid chain: Small ribosomal subunit protein uS13 (121 aa).

The tract at residues 93-121 (RGLPMRGQRTRTNARTRKGPRKAAQSLKK) is disordered.

Belongs to the universal ribosomal protein uS13 family. As to quaternary structure, part of the 30S ribosomal subunit. Forms a loose heterodimer with protein S19. Forms two bridges to the 50S subunit in the 70S ribosome.

In terms of biological role, located at the top of the head of the 30S subunit, it contacts several helices of the 16S rRNA. In the 70S ribosome it contacts the 23S rRNA (bridge B1a) and protein L5 of the 50S subunit (bridge B1b), connecting the 2 subunits; these bridges are implicated in subunit movement. Contacts the tRNAs in the A and P-sites. The chain is Small ribosomal subunit protein uS13 from Albidiferax ferrireducens (strain ATCC BAA-621 / DSM 15236 / T118) (Rhodoferax ferrireducens).